Reading from the N-terminus, the 267-residue chain is Alkaline ceramidase 3 (267 aa).

The Cytoplasmic segment spans residues 1–33 (MAPAVDRKGYWGPTTSTLDWCEENYVVTLFVAE). Ca(2+)-binding residues include aspartate 19, tryptophan 20, glutamate 22, asparagine 24, and glutamate 33. A helical transmembrane segment spans residues 34–55 (FWNTVSNLIMIIPPIFGAIQGI). Over 56–61 (RDRLEK) the chain is Lumenal. A helical membrane pass occupies residues 62-82 (RYIAAYLALTVVGMGSWCFHM). A Zn(2+)-binding site is contributed by histidine 81. At 83-87 (TLKYE) the chain is on the cytoplasmic side. A helical membrane pass occupies residues 88-108 (MQLLDELPMIYSCCIFVYCMF). At 109–118 (ECFKTKSSIN) the chain is on the lumenal side. The chain crosses the membrane as a helical span at residues 119 to 139 (YHLLFTLFLYSLTVTTIYLKV). At 140-141 (KE) the chain is on the cytoplasmic side. Residues 142 to 162 (PIFHQVMYGMLVFTLVLRSIY) form a helical membrane-spanning segment. The Lumenal portion of the chain corresponds to 163–173 (IVTWVYPWLRG). A helical membrane pass occupies residues 174–194 (LGYTSLTVFLLGFLLWNIDNI). Topologically, residues 195–215 (FCDSLRNFRKRVPPVLGVTTQ) are cytoplasmic. Residues 216-236 (FHAWWHILTGLGSYLHILFSL) form a helical membrane-spanning segment. Zn(2+) is bound by residues histidine 217 and histidine 221. Over 237 to 267 (YTRTLYLRYRPKVKFLFGIWPAVMFEPQRKH) the chain is Lumenal.

The protein belongs to the alkaline ceramidase family. Requires Zn(2+) as cofactor. As to expression, up-regulated with age in cerebeLlum and cerebrum.

It localises to the endoplasmic reticulum membrane. Its subcellular location is the golgi apparatus membrane. It carries out the reaction an N-acyl-(4R)-4-hydroxysphinganine + H2O = (4R)-hydroxysphinganine + a fatty acid. The catalysed reaction is N-(5Z,8Z,11Z,14Z-eicosatetraenoyl)-sphing-4-enine + H2O = sphing-4-enine + (5Z,8Z,11Z,14Z)-eicosatetraenoate. It catalyses the reaction N-(5Z,8Z,11Z,14Z-eicosatetraenoyl)-sphinganine + H2O = sphinganine + (5Z,8Z,11Z,14Z)-eicosatetraenoate. The enzyme catalyses N-(5Z,8Z,11Z,14Z-eicosatetraenoyl)-(4R)-hydroxysphinganine + H2O = (4R)-hydroxysphinganine + (5Z,8Z,11Z,14Z)-eicosatetraenoate. It carries out the reaction N-(11Z-eicosenoyl)-sphing-4-enine + H2O = (11Z)-eicosenoate + sphing-4-enine. The catalysed reaction is N-(11Z-eicosenoyl)-sphinganine + H2O = (11Z)-eicosenoate + sphinganine. It catalyses the reaction N-(11Z-eicosenoyl)-(4R)-hydroxysphinganine + H2O = (11Z)-eicosenoate + (4R)-hydroxysphinganine. The enzyme catalyses N-(9Z-octadecenoyl)-sphing-4-enine + H2O = sphing-4-enine + (9Z)-octadecenoate. It carries out the reaction N-(9Z-octadecenoyl)-sphinganine + H2O = sphinganine + (9Z)-octadecenoate. The catalysed reaction is N-(9Z-octadecenoyl)-(4R)-hydroxysphinganine + H2O = (4R)-hydroxysphinganine + (9Z)-octadecenoate. It catalyses the reaction an N-acylsphing-4-enine + H2O = sphing-4-enine + a fatty acid. The enzyme catalyses an N-acylsphinganine + H2O = sphinganine + a fatty acid. The protein operates within lipid metabolism; sphingolipid metabolism. With respect to regulation, activated by Ca(2+) and inhibited by Zn(2+). In terms of biological role, endoplasmic reticulum and Golgi ceramidase that catalyzes the hydrolysis of unsaturated long-chain C18:1-, C20:1- and C20:4-ceramides, dihydroceramides and phytoceramides into sphingoid bases like sphingosine and free fatty acids at alkaline pH. Ceramides, sphingosine, and its phosphorylated form sphingosine-1-phosphate are bioactive lipids that mediate cellular signaling pathways regulating several biological processes including cell proliferation, apoptosis and differentiation. Controls the generation of sphingosine in erythrocytes, and thereby sphingosine-1-phosphate in plasma. Through the regulation of ceramides and sphingosine-1-phosphate homeostasis in the brain may play a role in neurons survival and function. By regulating the levels of pro-inflammatory ceramides in immune cells and tissues, may modulate the inflammatory response. The protein is Alkaline ceramidase 3 (Acer3) of Mus musculus (Mouse).